The following is a 352-amino-acid chain: Gap junction alpha-4 protein (352 aa).

The Cytoplasmic portion of the chain corresponds to 2–23 (GDWEFLEKLLDQVQEHSTSIGK). Residues 24–46 (IWLMVLFIFRILILGLAGESVWG) traverse the membrane as a helical segment. Residues 47-76 (DEQSDFTCNTEQPGCTNVCYDKAFPISHVR) lie on the Extracellular side of the membrane. Residues 77–99 (YWVLQFLFVSTPTLFYLGHVIYL) form a helical membrane-spanning segment. Residues 100–153 (SRKEEKLKQKESELRALDDKEQVEQAIAIIEKKKLKLYIQEDGTVKIKGALMYT) lie on the Cytoplasmic side of the membrane. The chain crosses the membrane as a helical span at residues 154–176 (YLTSVIFKSIFEAGFLLGQWYLY). Over 177–208 (GFVMTPIYVCERVPCPHKVDCFVSRPMEKTIF) the chain is Extracellular. The helical transmembrane segment at 209–231 (IIFMLVVSLISLFLNVLELIHLI) threads the bilayer. The Cytoplasmic segment spans residues 232-352 (CKSMIHALKK…SSSASKKQYV (121 aa)). The interval 332 to 352 (HSTVEKASTRASSSASKKQYV) is disordered. Over residues 340 to 352 (TRASSSASKKQYV) the composition is skewed to low complexity.

It belongs to the connexin family. Alpha-type (group II) subfamily. A connexon is composed of a hexamer of connexins. As to expression, expressed in ovarian somatic cells, heart, leg muscle, liver and eye but not in brain.

Its subcellular location is the cell membrane. The protein localises to the cell junction. It localises to the gap junction. Its function is as follows. One gap junction consists of a cluster of closely packed pairs of transmembrane channels, the connexons, through which materials of low MW diffuse from one cell to a neighboring cell. This Xenopus laevis (African clawed frog) protein is Gap junction alpha-4 protein (gja4).